The chain runs to 1400 residues: MIQTGEEDEEKATSLEVEFASGNGVDDEEELRLQWATVERLPTFKRVTTALLARDEVSGKGRVIDVTRLEGAERRLLIEMLVKQIEDDNLRLLRKIRKRIDKVGIELPTVEVRFNNLSVEAECQVIHGKPIPTLWNTIKGLLSEFICSKKETKIGILKGVSGIVRPGRMTLLLGPPGCGKTTLLQALSGKFSDSVKVGGEVCYNGCSLSEFIPEKTSSYISQNDLHIPELSVRETLDFSACCQGIGSRMEIMKEISRMEKLQEIIPDPAVDAYMKATSVEGLKNNLQTDYILKILGLDICADTRVGDATRPGISGGEKRRLTTGELVVGPATTLFMDEISNGLDSSTTFQIVSCLQQLAHIAEATILISLLQPAPETFELFDDVILMGEGKIIYHAPRADICRFFEEFGFKCPERKGVADFLQEIMSKKDQEQYWCHRDKPYSYISVDSFINKFKESNLGLLLKEELSKPFNKSQTRKDGLCYKKYSLGKWEMLKACSRREFLLMKRNSFIYLFKSALLVFNALVTMTVFLQVGATTDSLHGNYLMGSLFTALFRLLADGLPELTLTISRLGVFCKQKDLYFYPAWAYAIPSIILKIPLSVLDSFIWTLLTYYVIGYSPEVKRFFLQFLILSTFNLSCVSMFRAIAAIFRTIIASTITGAISILVLSLFGGFVIPKSSMPAWLGWGFWLSPLSYAEIGLTANEFFSPRWSKVISSKTTAGEQMLDIRGLNFGRHSYWTAFGALVGFVLFFNALYVLALTYQNNPQRSRAIISHEKYSRPIEEDFKPCPKITSRAKTGKIILPFKPLTVTFQNVQYYIETPQGKTRQLLSDITGALKPGVLTSLMGVSGAGKTTLLDVLSGRKTRGIIKGEIKVGGYPKVQETFARVSGYCEQFDIHSPNITVEESLKYSAWLRLPYNIDSKTKNELVKEVLETVELDDIKDSVVGLPGISGLSIEQRKRLTIAVELVANPSIIFMDEPTTGLDARAAAIVMRAVKNVAETGRTVVCTIHQPSIDIFETFDELILMKNGGQLVYYGPPGQNSSKVIEYFESFSGLPKIQKNCNPATWILDITSKSAEEKLGIDFSQSYKDSTLYKQNKMVVEQLSSASLGSEALRFPSQFSQTAWVQLKACLWKQHYSYWRNPSHNITRIVFILLDSTLCGLLFWQKAEDINNQQDLISIFGSMYTLVVFPGMNNCAAVINFIAAERNVFYRERFARMYSSWAYSFSQVLIEVPYSLLQSLLCTIIVYPTIGYHMSVYKMFWSLYSIFCSLLIFNYSGMLMVALTPNIHMAVTLRSSFFSMLNLFAGFVIPKQKIPKWWIWMYYLSPTSWVLEGLLSSQYGDVDKEILVFGEKKRVSAFLEDYFGYKHESLAVVAFVLIAYPIIVATLFAFFMSKLSFQKK.

A glycan (N-linked (GlcNAc...) asparagine) is linked at N116. The region spanning 141–414 (LLSEFICSKK…FEEFGFKCPE (274 aa)) is the ABC transporter 1 domain. 174 to 181 (GPPGCGKT) contributes to the ATP binding site. N-linked (GlcNAc...) asparagine glycosylation occurs at N472. The ABC transmembrane type-2 1 domain maps to 492 to 704 (EMLKACSRRE…AEIGLTANEF (213 aa)). A run of 7 helical transmembrane segments spans residues 510–530 (FIYLFKSALLVFNALVTMTVF), 553–573 (LFRLLADGLPELTLTISRLGV), 582–602 (FYPAWAYAIPSIILKIPLSVL), 628–648 (FLILSTFNLSCVSMFRAIAAI), 652–672 (IIASTITGAISILVLSLFGGF), 679–699 (MPAWLGWGFWLSPLSYAEIGL), and 738–758 (TAFGALVGFVLFFNALYVLAL). An ABC transporter 2 domain is found at 808 to 1053 (VTFQNVQYYI…VIEYFESFSG (246 aa)). 845-852 (GVSGAGKT) contacts ATP. N899 and N1040 each carry an N-linked (GlcNAc...) asparagine glycan. Positions 1125-1339 (VQLKACLWKQ…VLEGLLSSQY (215 aa)) constitute an ABC transmembrane type-2 2 domain. Helical transmembrane passes span 1144-1164 (HNITRIVFILLDSTLCGLLFW), 1179-1199 (IFGSMYTLVVFPGMNNCAAVI), 1228-1248 (VLIEVPYSLLQSLLCTIIVYP), 1263-1283 (LYSIFCSLLIFNYSGMLMVAL), 1289-1309 (MAVTLRSSFFSMLNLFAGFVI), 1317-1337 (WWIWMYYLSPTSWVLEGLLSS), and 1372-1392 (VVAFVLIAYPIIVATLFAFFM).

This sequence belongs to the ABC transporter superfamily. ABCG family. PDR (TC 3.A.1.205) subfamily. In terms of tissue distribution, confined to roots. In seeds, mainly expressed in the embryo and, to a lesser extent, in the endosperm.

It is found in the cell membrane. It carries out the reaction abscisate(out) + ATP + H2O = abscisate(in) + ADP + phosphate + H(+). Functionally, together with ABCG40, import into the embryo the abscisic acid (ABA) delivered from the endosperm via ABCG25 and ABCG31-mediated export to suppress radicle extension and subsequent embryonic growth. Involved in root secretion of phytochemicals (phenolics and sugars) which regulate soil microbiota, influencing both fungal and bacterial communities. May be a general defense protein. The protein is ABC transporter G family member 30 of Arabidopsis thaliana (Mouse-ear cress).